A 377-amino-acid polypeptide reads, in one-letter code: Flagellin C (377 aa).

2 coiled-coil regions span residues 103-129 and 301-340; these read SNSK…VAET and VDSH…KDTD.

Belongs to the bacterial flagellin family. As to quaternary structure, heteromer of multiple flagellin subunits including FlaA, FlaB, FlaC, FlaD and FlaE.

Its subcellular location is the secreted. It is found in the bacterial flagellum. In terms of biological role, flagellin is the subunit protein which polymerizes to form the filaments of bacterial flagella. FlaC is not essential for flagellar synthesis and motility. This Vibrio cholerae serotype O1 (strain ATCC 39541 / Classical Ogawa 395 / O395) protein is Flagellin C (flaC).